The primary structure comprises 98 residues: MSMVYANIFLAFIMSLMGLLVYRSHLMSSLLCLEGMMLSLFVMMTVTILINHFTLASMAPIILLVFAACEAALGLSLLVMVSNTYGTDYVQNLNLLQC.

Transmembrane regions (helical) follow at residues 1–21 (MSMV…GLLV), 30–50 (LLCL…TILI), and 61–81 (IILL…LVMV).

Belongs to the complex I subunit 4L family. In terms of assembly, core subunit of respiratory chain NADH dehydrogenase (Complex I) which is composed of 45 different subunits.

It is found in the mitochondrion inner membrane. It carries out the reaction a ubiquinone + NADH + 5 H(+)(in) = a ubiquinol + NAD(+) + 4 H(+)(out). Its function is as follows. Core subunit of the mitochondrial membrane respiratory chain NADH dehydrogenase (Complex I) which catalyzes electron transfer from NADH through the respiratory chain, using ubiquinone as an electron acceptor. Part of the enzyme membrane arm which is embedded in the lipid bilayer and involved in proton translocation. The protein is NADH-ubiquinone oxidoreductase chain 4L (MT-ND4L) of Pagophilus groenlandicus (Harp seal).